The chain runs to 332 residues: Ribosomal RNA small subunit methyltransferase C (332 aa).

This sequence belongs to the methyltransferase superfamily. RsmC family. As to quaternary structure, monomer.

It localises to the cytoplasm. The enzyme catalyses guanosine(1207) in 16S rRNA + S-adenosyl-L-methionine = N(2)-methylguanosine(1207) in 16S rRNA + S-adenosyl-L-homocysteine + H(+). Functionally, specifically methylates the guanine in position 1207 of 16S rRNA in the 30S particle. In Stutzerimonas stutzeri (strain A1501) (Pseudomonas stutzeri), this protein is Ribosomal RNA small subunit methyltransferase C.